Here is a 251-residue protein sequence, read N- to C-terminus: HTH-type transcriptional regulator UlaR (251 aa).

Residues 3-58 (EAQRHQILLDMLAQLGFVTVENVIERLGISPATARRDINKLDESGKLKKVRNGAEA) enclose the HTH deoR-type domain. Residues 20-39 (VTVENVIERLGISPATARRD) constitute a DNA-binding region (H-T-H motif).

The protein localises to the cytoplasm. Represses ulaG and the ulaABCDEF operon. In Salmonella arizonae (strain ATCC BAA-731 / CDC346-86 / RSK2980), this protein is HTH-type transcriptional regulator UlaR.